The sequence spans 177 residues: Dual-action ribosomal maturation protein DarP (177 aa).

The protein belongs to the DarP family.

The protein localises to the cytoplasm. Functionally, member of a network of 50S ribosomal subunit biogenesis factors which assembles along the 30S-50S interface, preventing incorrect 23S rRNA structures from forming. Promotes peptidyl transferase center (PTC) maturation. The chain is Dual-action ribosomal maturation protein DarP from Histophilus somni (strain 2336) (Haemophilus somnus).